Here is a 408-residue protein sequence, read N- to C-terminus: Argininosuccinate synthase (408 aa).

Residues 10–18 (AYSGGLDTS) and Ala-37 contribute to the ATP site. The L-citrulline site is built by Tyr-90 and Ser-95. Gly-120 lines the ATP pocket. The L-aspartate site is built by Thr-122, Asn-126, and Asp-127. Asn-126 is an L-citrulline binding site. L-citrulline contacts are provided by Arg-130, Ser-181, Ser-190, Glu-266, and Tyr-278.

Belongs to the argininosuccinate synthase family. Type 1 subfamily. In terms of assembly, homotetramer.

The protein localises to the cytoplasm. The enzyme catalyses L-citrulline + L-aspartate + ATP = 2-(N(omega)-L-arginino)succinate + AMP + diphosphate + H(+). Its pathway is amino-acid biosynthesis; L-arginine biosynthesis; L-arginine from L-ornithine and carbamoyl phosphate: step 2/3. The sequence is that of Argininosuccinate synthase from Laribacter hongkongensis (strain HLHK9).